A 99-amino-acid chain; its full sequence is Ferredoxin, vegetative (99 aa).

A 2Fe-2S ferredoxin-type domain is found at 4–96 (YQVRLINKKR…DCTIRTHQEP (93 aa)). [2Fe-2S] cluster is bound by residues Cys-42, Cys-47, Cys-50, and Cys-80.

The protein belongs to the 2Fe2S plant-type ferredoxin family. [2Fe-2S] cluster is required as a cofactor.

Ferredoxins are iron-sulfur proteins that transfer electrons in a wide variety of metabolic reactions. Donates electrons to the nitrogenase 2. This is Ferredoxin, vegetative (fdxH2) from Trichormus variabilis (strain ATCC 29413 / PCC 7937) (Anabaena variabilis).